Here is a 217-residue protein sequence, read N- to C-terminus: Uridine kinase (217 aa).

17–24 (GASASGKS) lines the ATP pocket.

This sequence belongs to the uridine kinase family.

It localises to the cytoplasm. The enzyme catalyses uridine + ATP = UMP + ADP + H(+). The catalysed reaction is cytidine + ATP = CMP + ADP + H(+). The protein operates within pyrimidine metabolism; CTP biosynthesis via salvage pathway; CTP from cytidine: step 1/3. Its pathway is pyrimidine metabolism; UMP biosynthesis via salvage pathway; UMP from uridine: step 1/1. The sequence is that of Uridine kinase from Haemophilus ducreyi (strain 35000HP / ATCC 700724).